Here is a 430-residue protein sequence, read N- to C-terminus: Histidine--tRNA ligase (430 aa).

It belongs to the class-II aminoacyl-tRNA synthetase family. As to quaternary structure, homodimer.

It localises to the cytoplasm. The catalysed reaction is tRNA(His) + L-histidine + ATP = L-histidyl-tRNA(His) + AMP + diphosphate + H(+). This Acinetobacter baumannii (strain ACICU) protein is Histidine--tRNA ligase.